Reading from the N-terminus, the 216-residue chain is Large ribosomal subunit protein uL3 (216 aa).

Residues 135-156 are disordered; sequence LGASHGTQRKHRSPGSIGGCAT.

This sequence belongs to the universal ribosomal protein uL3 family. Part of the 50S ribosomal subunit. Forms a cluster with proteins L14 and L19.

One of the primary rRNA binding proteins, it binds directly near the 3'-end of the 23S rRNA, where it nucleates assembly of the 50S subunit. This chain is Large ribosomal subunit protein uL3, found in Thermobifida fusca (strain YX).